The chain runs to 393 residues: MTNSNRIKLTWISFLSYALTGALVIVTGMVMGNIADYFQLPVSSMSNTFTFLNAGILISIFLNAWLMEIIPLKTQLRFGFILMVLAVAGLMFSHSLALFSAAMFVLGLVSGITMSIGTFLITQLYEGRQRGSRLLFTDSFFSMAGMIFPMVAAFLLARSIEWYWVYACIGLVYLAIFILTFGCEFPALGKHAQHSQAPVVKEKWGIGVLFLAVAALCYILGQLGFISWVPEYAKGLGMSLNDAGALVSDFWMSYMFGMWAFSFILRFFDLQRILTVLAGMAAVLMYLFITGTQAHMPWFILTLGFFSSAIYTSIITLGSQQTKVASPKLVNFILTCGTIGTMLTFVVTGPIVAHSGPQAALLTANGLYAVVFVMCFALGFVSRHRQHSAPATH.

12 helical membrane passes run 11-31 (WISFLSYALTGALVIVTGMVM), 51-71 (FLNAGILISIFLNAWLMEIIP), 78-98 (FGFILMVLAVAGLMFSHSLAL), 101-121 (AAMFVLGLVSGITMSIGTFLI), 134-154 (LLFTDSFFSMAGMIFPMVAAF), 162-182 (WYWVYACIGLVYLAIFILTFG), 206-226 (IGVLFLAVAALCYILGQLGFI), 245-265 (ALVSDFWMSYMFGMWAFSFIL), 273-293 (ILTVLAGMAAVLMYLFITGTQ), 298-318 (WFILTLGFFSSAIYTSIITLG), 332-352 (FILTCGTIGTMLTFVVTGPIV), and 361-381 (LLTANGLYAVVFVMCFALGFV).

The protein belongs to the major facilitator superfamily. TsgA family.

The protein resides in the cell inner membrane. The chain is Protein TsgA from Salmonella agona (strain SL483).